Consider the following 199-residue polypeptide: Prostatic spermine-binding protein (199 aa).

The first 18 residues, 1 to 18 (MLLLLTLAFLASPTCRAQ), serve as a signal peptide directing secretion. Residues 19–151 (NVLGNAAGKY…VRGIGFKWGN (133 aa)) enclose the Jacalin-type lectin domain. Asn-62 carries N-linked (GlcNAc...) asparagine glycosylation. The segment at 159-199 (HYNNKEDKADNKDADNKDADNKDDGDEDDDGNDDDDQKDES) is disordered. A compositionally biased stretch (basic and acidic residues) spans 160–180 (YNNKEDKADNKDADNKDADNK). Acidic residues predominate over residues 181 to 199 (DDGDEDDDGNDDDDQKDES).

The protein to rat SBP. Prostate.

This protein seems to be functional equivalent to rat prostatic spermine-binding protein, which is involved in polyamine binding. The polypeptide is Prostatic spermine-binding protein (Sbp) (Mus musculus (Mouse)).